Reading from the N-terminus, the 971-residue chain is MSHPIQFVNANNSDKSHQLGGQYSIPQDLRENLQKEAARIGENEKDVLQEKMETRTVQNREDSYHKRRFDMKFEPDSDTQTVTSSENTQDAVVPRKRKSRWDVKGYEPPDESSTAVKENSDSALVNVEGIHDLMFFKPSDHKYFADVISKKPIDELNKDEKKERTLSMLLLKIKNGNTASRRTSMRILTDKAVTFGPEMIFNRLLPILLDRSLEDQERHLMIKTIDRVLYQLGDLTKPYVHKILVVAAPLLIDEDPMVRSTGQEIITNLSTVAGLKTILTVMRPDIENEDEYVRNVTSRAAAVVAKALGVNQLLPFINAACHSRKSWKARHTGIKIVQQIGILLGIGVLNHLTGLMSCIKDCLMDDHVPVRIVTAHTLSTLAENSYPYGIEVFNVVLEPLWKGIRSHRGKVLSSFLKAVGSMIPLMDPEYAGYYTTEAMRIIRREFDSPDDEMKKTILLVLQKCSAVESITPKFLREEIAPEFFQKFWVRRVALDRPLNKVVTYTTVTLAKKLGCSYTIDKLLTPLRDEAEPFRTMAVHAVTRTVNLLGTADLDERLETRLIDALLIAFQEQTNSDSIIFKGFGAVTVSLDIRMKPFLAPIVSTILNHLKHKTPLVRQHAADLCAILIPVIKNCHEFEMLNKLNIILYESLGEVYPEVLGSIINAMYCITSVMDLDKLQPPINQILPTLTPILRNKHRKVEVNTIKFVGLIGKLAPTYAPPKEWMRICFELLELLKSTNKEIRRSANATFGFIAEAIGPHDVLVALLNNLKVQERQLRVCTAVAIGIVAKVCGPYNVLPVIMNEYTTPETNVQNGVLKAMSFMFEYIGNMSKDYIYFITPLLEDALTDRDLVHRQTASNVITHLALNCSGTGHEDAFIHLMNLLIPNIFETSPHAIMRILEGLEALSQALGPGLFMNYIWAGLFHPAKNVRKAFWRVYNNMYVMYQDAMVPFYPVTPDNNEEYIEELDLVL.

Disordered stretches follow at residues 1–22 (MSHP…LGGQ) and 54–118 (TRTV…AVKE). The span at 8 to 22 (VNANNSDKSHQLGGQ) shows a compositional bias: polar residues. Positions 54–75 (TRTVQNREDSYHKRRFDMKFEP) are enriched in basic and acidic residues. Positions 78 to 90 (DTQTVTSSENTQD) are enriched in polar residues. HEAT repeat units lie at residues 199–237 (MIFN…DLTK), 273–310 (AGLK…ALGV), 350–387 (NHLT…NSYP), 513–550 (LGCS…LLGT), 596–633 (PFLA…VIKN), 680–717 (PPIN…LAPT), 722–759 (KEWM…AIGP), 792–829 (CGPY…YIGN), and 832–870 (KDYI…NCSG).

It belongs to the SF3B1 family. As to quaternary structure, belongs to the CWC complex (or CEF1-associated complex), a spliceosome sub-complex reminiscent of a late-stage spliceosome composed of the U2, U5 and U6 snRNAs and at least BUD13, BUD31, BRR2, CDC40, CEF1, CLF1, CUS1, CWC2, CWC15, CWC21, CWC22, CWC23, CWC24, CWC25, CWC27, ECM2, HSH155, IST3, ISY1, LEA1, MSL1, NTC20, PRP8, PRP9, PRP11, PRP19, PRP21, PRP22, PRP45, PRP46, SLU7, SMB1, SMD1, SMD2, SMD3, SMX2, SMX3, SNT309, SNU114, SPP2, SYF1, SYF2, RSE1 and YJU2. Interacts with RDS3.

It localises to the nucleus. In terms of biological role, contacts pre-mRNA on both sides of the branch site early in spliceosome assembly. This chain is U2 snRNP component HSH155 (HSH155), found in Saccharomyces cerevisiae (strain ATCC 204508 / S288c) (Baker's yeast).